Here is a 694-residue protein sequence, read N- to C-terminus: Polyphosphate kinase (694 aa).

Residue Asn45 coordinates ATP. The Mg(2+) site is built by Arg367 and Arg397. His427 (phosphohistidine intermediate) is an active-site residue. Tyr460, Arg553, and His580 together coordinate ATP.

This sequence belongs to the polyphosphate kinase 1 (PPK1) family. Mg(2+) is required as a cofactor. Post-translationally, an intermediate of this reaction is the autophosphorylated ppk in which a phosphate is covalently linked to a histidine residue through a N-P bond.

It catalyses the reaction [phosphate](n) + ATP = [phosphate](n+1) + ADP. In terms of biological role, catalyzes the reversible transfer of the terminal phosphate of ATP to form a long-chain polyphosphate (polyP). This Campylobacter jejuni subsp. doylei (strain ATCC BAA-1458 / RM4099 / 269.97) protein is Polyphosphate kinase.